The sequence spans 156 residues: Protein-export protein SecB (156 aa).

Belongs to the SecB family. Homotetramer, a dimer of dimers. One homotetramer interacts with 1 SecA dimer.

It localises to the cytoplasm. Functionally, one of the proteins required for the normal export of preproteins out of the cell cytoplasm. It is a molecular chaperone that binds to a subset of precursor proteins, maintaining them in a translocation-competent state. It also specifically binds to its receptor SecA. This Paraburkholderia phymatum (strain DSM 17167 / CIP 108236 / LMG 21445 / STM815) (Burkholderia phymatum) protein is Protein-export protein SecB.